Here is a 208-residue protein sequence, read N- to C-terminus: Guanylate kinase (208 aa).

The Guanylate kinase-like domain occupies 8–187; it reads GVCLVISAPS…AISQARSVLT (180 aa). An ATP-binding site is contributed by 15–22; that stretch reads APSGAGKS.

Belongs to the guanylate kinase family.

The protein resides in the cytoplasm. It catalyses the reaction GMP + ATP = GDP + ADP. Functionally, essential for recycling GMP and indirectly, cGMP. This chain is Guanylate kinase, found in Gluconobacter oxydans (strain 621H) (Gluconobacter suboxydans).